The primary structure comprises 753 residues: A-kinase anchor protein 200 (753 aa).

5 disordered regions span residues 1 to 345 (MGKA…QIEA), 462 to 482 (VETR…PSRV), 531 to 604 (TEQE…IDPA), 620 to 641 (VEKE…SDEQ), and 658 to 684 (VEET…DKEN). Residue Gly2 is the site of N-myristoyl glycine attachment. Composition is skewed to basic and acidic residues over residues 8-38 (RSID…DQKT) and 59-77 (AVEK…DLTT). Residues 81–93 (AAVAEGGDAVAET) show a composition bias toward low complexity. The tract at residues 119 to 148 (KSKSKKDKVKKKWSFRSISFGKKDKQKPAK) is F-actin binding. The span at 120-132 (SKSKKDKVKKKWS) shows a compositional bias: basic residues. Residues Ser132, Ser135, and Ser137 each carry the phosphoserine modification. Residues 139 to 151 (GKKDKQKPAKSEE) are compositionally biased toward basic and acidic residues. A compositionally biased stretch (low complexity) spans 152–181 (ATSPTSGTTSPTTAEAEAAPAGDAAVAEPS). Residues 216–227 (EQEKQANGETEK) show a composition bias toward basic and acidic residues. Over residues 246–262 (EPATVTATESNTTATEE) the composition is skewed to low complexity. Residues 345 to 725 (ASSEVIETVT…AEQEGESNNK (381 aa)) form an interaction with PKA-R2 region. Positions 468-480 (SPPPPLPKSPPPS) are enriched in pro residues. The segment covering 532–544 (EQEKQQEEAKVDS) has biased composition (basic and acidic residues). Low complexity predominate over residues 545-561 (VPETIEESSSTVVVEEV). Basic and acidic residues predominate over residues 578–594 (DVQKPIEDQDTPDEKES). The segment covering 626–638 (SISSNVAESSSVS) has biased composition (low complexity). Over residues 674-684 (EEAHSDNDKEN) the composition is skewed to basic and acidic residues.

As to quaternary structure, homodimer. Interacts with Cam; interaction is calcium-dependent and is inhibited by PKC-mediated phosphorylation of Akap200. Interacts with N/Notch; the interaction stabilizes N/Notch protein levels by preventing Cbl-mediated ubiquitination and subsequent lysosomal degradation of N/Notch. Interacts with Pka-R2. Binds to F-actin; interaction is independent of myristoylation, but is inhibited by Akap200 phosphorylation and Cam binding. Isoform B: Does not bind to Pka-R2. Myristoylated; myristoylation promotes accumulation at the cell periphery. Post-translationally, phosphorylated; phosphorylation prevents binding to F-actin and Cam. In terms of tissue distribution, detected in the brain in both neurons and glia (including perineurial glia); specifically in the neuronal nuclei in the cortex and synaptic neuropil (at protein level). Detected in germline cells, somatic follicle cells and outer rim of the ring canals during oogenesis (at protein level). Isoform A: Detected in the adult (at protein level). Isoform B: Detected in the adult with higher levels in the head (at protein level).

It localises to the cytoplasm. The protein resides in the cytosol. Its subcellular location is the cell membrane. The protein localises to the cytoskeleton. Scaffolding protein involved in the regulation of PKA signaling and anchoring to the actin cytoskeleton integrating signals propagated by cAMP, diacylglycerol and calcium. Contributes to the maintenance and regulation of cytoskeletal structures in germline via PKA-mediated signaling. As part of ethanol response in the glia, mediates ethanol-induced structural remodeling of actin cytoskeleton and perineurial membrane topology by anchoring PKA to the membrane of perineurial glia. In specific tissues such as eye and thorax, promotes N/Notch protein stability by inhibiting Cbl-mediated ubiquitination and lysosomal degradation pathway of N/Notch in a PKA-independent way. In the circadian brain neurons evening cells (E-cells), might have a role in circadian pacemaker synchronization by playing a redundant role in signaling downstream of the G protein-couple receptor Pdfr. This Drosophila melanogaster (Fruit fly) protein is A-kinase anchor protein 200.